Here is a 294-residue protein sequence, read N- to C-terminus: Acetylglutamate kinase (294 aa).

Residues 64-65 (GG), Arg-86, and Asn-189 contribute to the substrate site.

It belongs to the acetylglutamate kinase family. ArgB subfamily.

It localises to the cytoplasm. It carries out the reaction N-acetyl-L-glutamate + ATP = N-acetyl-L-glutamyl 5-phosphate + ADP. It participates in amino-acid biosynthesis; L-arginine biosynthesis; N(2)-acetyl-L-ornithine from L-glutamate: step 2/4. Its function is as follows. Catalyzes the ATP-dependent phosphorylation of N-acetyl-L-glutamate. This chain is Acetylglutamate kinase, found in Carboxydothermus hydrogenoformans (strain ATCC BAA-161 / DSM 6008 / Z-2901).